Consider the following 280-residue polypeptide: Undecaprenyl-diphosphatase (280 aa).

Helical transmembrane passes span 2–22 (FIIEIFISIIYGIIEGITEWL), 45–65 (AFMEMFNVVIQLGAILAVVVI), 86–106 (WQLWAKVVVAALPAAVIGLFL), 114–134 (FYNLVSVSVMLIVYGAAFIYL), 147–167 (LASLPYKTALQIGLFQILALF), 188–208 (SVVTEFTFYLGIPIMFGASGW), 223–243 (GQIFLLLVAMGVAFGVSLVVI), and 255–275 (FTIFGKYRIGLGGVLLVYAAI).

It belongs to the UppP family.

The protein localises to the cell membrane. The enzyme catalyses di-trans,octa-cis-undecaprenyl diphosphate + H2O = di-trans,octa-cis-undecaprenyl phosphate + phosphate + H(+). In terms of biological role, catalyzes the dephosphorylation of undecaprenyl diphosphate (UPP). Confers resistance to bacitracin. This Streptococcus sanguinis (strain SK36) protein is Undecaprenyl-diphosphatase.